The sequence spans 1554 residues: Lysine-specific demethylase 5C (1554 aa).

The 42-residue stretch at 14–55 (CPVFEPSWAEFRDPLGYIAKIRPIAEKSGICKIRPPADWQPP) folds into the JmjN domain. The ARID domain maps to 79–169 (TRVKLNYLDQ…IVYPYEMYQS (91 aa)). The span at 197–207 (LRQSVQPSKFN) shows a compositional bias: polar residues. Residues 197 to 227 (LRQSVQPSKFNSYGRRAKRLQPDPEPTEEDI) are disordered. Glycyl lysine isopeptide (Lys-Gly) (interchain with G-Cter in SUMO2) cross-links involve residues lysine 205, lysine 229, lysine 244, and lysine 274. Residues 284–303 (ESTSPKTFLEGKEELSHSPE) are disordered. Residue serine 287 is modified to Phosphoserine. Lysine 295 is covalently cross-linked (Glycyl lysine isopeptide (Lys-Gly) (interchain with G-Cter in SUMO2)). 2 positions are modified to phosphoserine: serine 301 and serine 317. Residues 326-372 (VCRMCSRGDEDDKLLLCDGCDDNYHIFCLLPPLPEIPKGVWRCPKCV) form a PHD-type 1 zinc finger. Residues 468–634 (EYATSGWNLN…AGRQCIEHYR (167 aa)) enclose the JmjC domain. Residues histidine 514, aspartate 517, and histidine 602 each contribute to the Fe cation site. Residues serine 893 and serine 897 each carry the phosphoserine modification. Lysine 1127 is covalently cross-linked (Glycyl lysine isopeptide (Lys-Gly) (interchain with G-Cter in SUMO2)). The PHD-type 2 zinc-finger motif lies at 1187–1248 (ICVCGQVPAG…DTKFLCPLCM (62 aa)). Disordered regions lie at residues 1319–1364 (SKPE…EGSG) and 1437–1535 (AERH…APFS). Residue serine 1353 is modified to Phosphoserine. Residues 1442–1457 (SRTRGRALERRRRRKV) are compositionally biased toward basic residues. A compositionally biased stretch (basic and acidic residues) spans 1458–1475 (DRGGEPDDPAREELEPKR). Residues 1482-1497 (EAEEVQEEEELEEETG) show a composition bias toward acidic residues.

The protein belongs to the JARID1 histone demethylase family. As to quaternary structure, part of two distinct complexes, one containing E2F6, and the other containing REST. Interacts with ZMYND8. Requires Fe(2+) as cofactor.

The protein localises to the nucleus. It carries out the reaction N(6),N(6),N(6)-trimethyl-L-lysyl(4)-[histone H3] + 3 2-oxoglutarate + 3 O2 = L-lysyl(4)-[histone H3] + 3 formaldehyde + 3 succinate + 3 CO2. Histone demethylase that specifically demethylates 'Lys-4' of histone H3, thereby playing a central role in histone code. Does not demethylate histone H3 'Lys-9', H3 'Lys-27', H3 'Lys-36', H3 'Lys-79' or H4 'Lys-20'. Demethylates trimethylated and dimethylated but not monomethylated H3 'Lys-4'. Participates in transcriptional repression of neuronal genes by recruiting histone deacetylases and REST at neuron-restrictive silencer elements. Represses the CLOCK-BMAL1 heterodimer-mediated transcriptional activation of the core clock component PER2. The polypeptide is Lysine-specific demethylase 5C (Kdm5c) (Mus musculus (Mouse)).